We begin with the raw amino-acid sequence, 326 residues long: Biotin synthase (326 aa).

The 230-residue stretch at 50 to 279 (FNGEKVDVEQ…ESVIKISGGR (230 aa)) folds into the Radical SAM core domain. 3 residues coordinate [4Fe-4S] cluster: C68, C72, and C75. The [2Fe-2S] cluster site is built by C112, C145, C204, and K274.

This sequence belongs to the radical SAM superfamily. Biotin synthase family. Homodimer. Requires [4Fe-4S] cluster as cofactor. The cofactor is [2Fe-2S] cluster.

It catalyses the reaction (4R,5S)-dethiobiotin + (sulfur carrier)-SH + 2 reduced [2Fe-2S]-[ferredoxin] + 2 S-adenosyl-L-methionine = (sulfur carrier)-H + biotin + 2 5'-deoxyadenosine + 2 L-methionine + 2 oxidized [2Fe-2S]-[ferredoxin]. It participates in cofactor biosynthesis; biotin biosynthesis; biotin from 7,8-diaminononanoate: step 2/2. In terms of biological role, catalyzes the conversion of dethiobiotin (DTB) to biotin by the insertion of a sulfur atom into dethiobiotin via a radical-based mechanism. The chain is Biotin synthase from Nitrosopumilus maritimus (strain SCM1).